The chain runs to 336 residues: Dihydroorotate dehydrogenase (quinone) (336 aa).

FMN is bound by residues 62 to 66 (AGLDK) and threonine 86. Position 66 (lysine 66) interacts with substrate. 111–115 (NRMGF) serves as a coordination point for substrate. Asparagine 139 and asparagine 172 together coordinate FMN. Asparagine 172 contributes to the substrate binding site. The active-site Nucleophile is the serine 175. A substrate-binding site is contributed by asparagine 177. FMN contacts are provided by lysine 217 and threonine 245. Residue 246 to 247 (NT) participates in substrate binding. FMN is bound by residues glycine 268, glycine 297, and 318-319 (YS).

This sequence belongs to the dihydroorotate dehydrogenase family. Type 2 subfamily. Monomer. The cofactor is FMN.

The protein resides in the cell membrane. It catalyses the reaction (S)-dihydroorotate + a quinone = orotate + a quinol. It participates in pyrimidine metabolism; UMP biosynthesis via de novo pathway; orotate from (S)-dihydroorotate (quinone route): step 1/1. Functionally, catalyzes the conversion of dihydroorotate to orotate with quinone as electron acceptor. This is Dihydroorotate dehydrogenase (quinone) from Proteus mirabilis (strain HI4320).